We begin with the raw amino-acid sequence, 202 residues long: NADH:(hydroxy)cinnamate reductase subunit CrdA (202 aa).

The protein belongs to the NADH-dependent flavin reductase family. NADH:(hydroxy)cinnamate reductase Crd is a heterodimer composed of CrdA and CrdB subunits, encoded by adjacent genes. Requires FMN as cofactor.

Functionally, component of the NADH:(hydroxy)cinnamate reductase. CrdA is probably reduced by NADH and then transfers the electrons to the catalytic center of CrdB. Is likely involved in protecting V.ruber from (hydroxy)cinnamate poisoning. The chain is NADH:(hydroxy)cinnamate reductase subunit CrdA from Vibrio ruber (strain DSM 16370 / JCM 11486 / BCRC 17186 / CECT 7878 / LMG 23124 / VR1).